Reading from the N-terminus, the 1127-residue chain is WD repeat and HMG-box DNA-binding protein 1 (1127 aa).

WD repeat units follow at residues 11–50 (GHPE…DPKS), 52–91 (SIGE…GILT), 92–131 (RFTT…QQKT), 134–173 (GHSA…CEAV), 184–223 (FNAK…NICT), 228–267 (FITQ…CLER), and 271–310 (EKGY…DVKQ). Disordered regions lie at residues 811 to 1013 (AAEQ…AENK) and 1064 to 1127 (KAKG…FKKE). Acidic residues predominate over residues 819-829 (QNEEEDEEEED). Basic and acidic residues predominate over residues 846-857 (GDSRAKPVKQDQ). Residues 858 to 877 (YEENNEEEMEEEEKEQEEAL) show a composition bias toward acidic residues. Polar residues-rich tracts occupy residues 881-891 (TPTANPFNKSV) and 918-937 (SASQ…TSIL). Residues 948–960 (SASGSPSTSKSDS) show a composition bias toward low complexity. A DNA-binding region (HMG box) is located at residues 1013–1076 (KKPKTGFQLW…GDYPGEDGAD (64 aa)). Positions 1087–1100 (NMASNGCPQENTDS) are enriched in polar residues.

In terms of assembly, homodimer. Found in oocytes and in various other cells.

The protein localises to the nucleus. Its subcellular location is the nucleoplasm. It is found in the cytoplasm. Its function is as follows. Core replisome component that acts as a replication initiation factor. Binds directly to the CMG complex and functions as a hub to recruit additional proteins to the replication fork. This Xenopus laevis (African clawed frog) protein is WD repeat and HMG-box DNA-binding protein 1 (wdhd1).